The sequence spans 675 residues: Glycerophosphocholine phosphodiesterase GPCPD1 (675 aa).

Positions 1–115 constitute a CBM20 domain; that stretch reads MTPSQVTFEI…IIIDDGQFGI (115 aa). Substrate contacts are provided by residues arginine 70 and 88 to 89; that span reads HK. Serine 178 and serine 427 each carry phosphoserine. Residues 321–621 form the GP-PDE domain; it reads PLDVGHRGAG…DRIYDWMPEQ (301 aa). Tyrosine 611 is modified (phosphotyrosine).

Belongs to the glycerophosphoryl diester phosphodiesterase family. As to expression, widely expressed with highest levels in skeletal muscle and heart.

The protein localises to the cytoplasm. It localises to the cytosol. The enzyme catalyses sn-glycerol 3-phosphocholine + H2O = sn-glycerol 3-phosphate + choline + H(+). May be involved in the negative regulation of skeletal muscle differentiation, independently of its glycerophosphocholine phosphodiesterase activity. This is Glycerophosphocholine phosphodiesterase GPCPD1 (Gpcpd1) from Mus musculus (Mouse).